The sequence spans 284 residues: Esterase alnB (284 aa).

Active-site charge relay system residues include Ser93, Asp226, and His255.

The protein belongs to the LovG family.

It participates in polyketide biosynthesis. Esterase; part of the gene cluster that mediates the biosynthesis of asperlin, a polyketide showing anti-inflammatory, antitumor and antibiotic activities. The first step of the asperlin biosynthesis is the production of the intermediate 2,4,6-octatrienoic acid by the highly redusing polyketide synthase alnA with cleavage of the PKS product by the esterase alnB. 2,4,6-octatrienoic acid is further converted to asperlin via several steps involving the remaining enzymes from the cluster. The protein is Esterase alnB of Emericella nidulans (strain FGSC A4 / ATCC 38163 / CBS 112.46 / NRRL 194 / M139) (Aspergillus nidulans).